A 354-amino-acid chain; its full sequence is Uroporphyrinogen decarboxylase (354 aa).

Substrate-binding positions include 27–31 (RQAGR), Asp77, Tyr154, Thr209, and His327.

The protein belongs to the uroporphyrinogen decarboxylase family. As to quaternary structure, homodimer.

Its subcellular location is the cytoplasm. It carries out the reaction uroporphyrinogen III + 4 H(+) = coproporphyrinogen III + 4 CO2. It functions in the pathway porphyrin-containing compound metabolism; protoporphyrin-IX biosynthesis; coproporphyrinogen-III from 5-aminolevulinate: step 4/4. Catalyzes the decarboxylation of four acetate groups of uroporphyrinogen-III to yield coproporphyrinogen-III. The protein is Uroporphyrinogen decarboxylase of Pectobacterium carotovorum subsp. carotovorum (strain PC1).